The sequence spans 487 residues: Cobyric acid synthase (487 aa).

Residues 249–435 (GIDIAIVRLP…IHGIFDEGDF (187 aa)) enclose the GATase cobBQ-type domain. Cys-330 serves as the catalytic Nucleophile. His-427 is an active-site residue.

Belongs to the CobB/CobQ family. CobQ subfamily.

The protein operates within cofactor biosynthesis; adenosylcobalamin biosynthesis. In terms of biological role, catalyzes amidations at positions B, D, E, and G on adenosylcobyrinic A,C-diamide. NH(2) groups are provided by glutamine, and one molecule of ATP is hydrogenolyzed for each amidation. The sequence is that of Cobyric acid synthase from Clostridium perfringens (strain SM101 / Type A).